A 159-amino-acid chain; its full sequence is Ribosomal RNA large subunit methyltransferase H (159 aa).

S-adenosyl-L-methionine is bound by residues L76, G108, and 127–132; that span reads FGLLTL.

The protein belongs to the RNA methyltransferase RlmH family. In terms of assembly, homodimer.

The protein resides in the cytoplasm. The enzyme catalyses pseudouridine(1915) in 23S rRNA + S-adenosyl-L-methionine = N(3)-methylpseudouridine(1915) in 23S rRNA + S-adenosyl-L-homocysteine + H(+). In terms of biological role, specifically methylates the pseudouridine at position 1915 (m3Psi1915) in 23S rRNA. This chain is Ribosomal RNA large subunit methyltransferase H, found in Streptococcus mutans serotype c (strain ATCC 700610 / UA159).